The chain runs to 209 residues: Thiamine-phosphate synthase (209 aa).

4-amino-2-methyl-5-(diphosphooxymethyl)pyrimidine is bound by residues 36 to 40 (QYRDK) and asparagine 68. Positions 69 and 87 each coordinate Mg(2+). Threonine 106 contributes to the 4-amino-2-methyl-5-(diphosphooxymethyl)pyrimidine binding site. Residue 133 to 135 (SST) participates in 2-[(2R,5Z)-2-carboxy-4-methylthiazol-5(2H)-ylidene]ethyl phosphate binding. Lysine 136 lines the 4-amino-2-methyl-5-(diphosphooxymethyl)pyrimidine pocket. Glycine 163 provides a ligand contact to 2-[(2R,5Z)-2-carboxy-4-methylthiazol-5(2H)-ylidene]ethyl phosphate.

Belongs to the thiamine-phosphate synthase family. The cofactor is Mg(2+).

The catalysed reaction is 2-[(2R,5Z)-2-carboxy-4-methylthiazol-5(2H)-ylidene]ethyl phosphate + 4-amino-2-methyl-5-(diphosphooxymethyl)pyrimidine + 2 H(+) = thiamine phosphate + CO2 + diphosphate. It carries out the reaction 2-(2-carboxy-4-methylthiazol-5-yl)ethyl phosphate + 4-amino-2-methyl-5-(diphosphooxymethyl)pyrimidine + 2 H(+) = thiamine phosphate + CO2 + diphosphate. The enzyme catalyses 4-methyl-5-(2-phosphooxyethyl)-thiazole + 4-amino-2-methyl-5-(diphosphooxymethyl)pyrimidine + H(+) = thiamine phosphate + diphosphate. It participates in cofactor biosynthesis; thiamine diphosphate biosynthesis; thiamine phosphate from 4-amino-2-methyl-5-diphosphomethylpyrimidine and 4-methyl-5-(2-phosphoethyl)-thiazole: step 1/1. Condenses 4-methyl-5-(beta-hydroxyethyl)thiazole monophosphate (THZ-P) and 2-methyl-4-amino-5-hydroxymethyl pyrimidine pyrophosphate (HMP-PP) to form thiamine monophosphate (TMP). This chain is Thiamine-phosphate synthase, found in Pseudomonas paraeruginosa (strain DSM 24068 / PA7) (Pseudomonas aeruginosa (strain PA7)).